We begin with the raw amino-acid sequence, 61 residues long: uncharacterized protein (61 aa).

The segment at P39 to Q61 is disordered.

This is an uncharacterized protein from Pan troglodytes (Chimpanzee).